The primary structure comprises 105 residues: MSKQKELFANEEIAEAEKTKLQPPPMYKVVLNNDDYTPMEFVVEVLQKFFGMDLDKATQVMLSVHYSGKGVCGTFTAEIAETKVVQVNTYARNNEHPLLCTMEKA.

Belongs to the ClpS family. As to quaternary structure, binds to the N-terminal domain of the chaperone ClpA.

Functionally, involved in the modulation of the specificity of the ClpAP-mediated ATP-dependent protein degradation. This is ATP-dependent Clp protease adapter protein ClpS from Aeromonas hydrophila subsp. hydrophila (strain ATCC 7966 / DSM 30187 / BCRC 13018 / CCUG 14551 / JCM 1027 / KCTC 2358 / NCIMB 9240 / NCTC 8049).